The sequence spans 553 residues: NADH-quinone oxidoreductase subunit M (553 aa).

The next 3 helical transmembrane spans lie at 4-24 (VPWLSVLWLVPLAGAVLIILL), 34-54 (WAGMVVSVLTLAVSIVVAAEF), and 84-104 (IAVVLVLLTTVLIPLLLVAGW). The segment at 113-135 (LSPASGRYPQRPAPPRLRSSGGE) is disordered. The next 10 helical transmembrane spans lie at 140–160 (VHAYVALTLAIESMVLMSVIA), 164–184 (LLFYVFFEAMLIPMYFLIGGF), 197–217 (FLLYNLFGGLIMLAAVIGLYV), 246–266 (AVFKALFLGFMFAFAIKAPLW), 316–336 (PLIVTLAIIGVIYGAIVAIGQ), 342–362 (LIAYTSISHFGFIIAGIFVMT), 371–391 (LYMLNHGLSTAAVFLIAGFLI), 420–440 (AMATVSLPGLAPFISEFLVLL), 447–467 (WLAAAFGVTALVLSAVYMLWL), and 492–512 (IVVAPLIALLLVLGVYPKPVL). A disordered region spans residues 527-553 (GQHDPAPSVAHPVPAVGASRTAEGPHP). The span at 531–544 (PAPSVAHPVPAVGA) shows a compositional bias: low complexity.

The protein belongs to the complex I subunit 4 family.

It localises to the cell membrane. The catalysed reaction is a quinone + NADH + 5 H(+)(in) = a quinol + NAD(+) + 4 H(+)(out). Functionally, NDH-1 shuttles electrons from NADH, via FMN and iron-sulfur (Fe-S) centers, to quinones in the respiratory chain. The immediate electron acceptor for the enzyme in this species is believed to be menaquinone. Couples the redox reaction to proton translocation (for every two electrons transferred, four hydrogen ions are translocated across the cytoplasmic membrane), and thus conserves the redox energy in a proton gradient. The sequence is that of NADH-quinone oxidoreductase subunit M (nuoM) from Mycobacterium tuberculosis (strain CDC 1551 / Oshkosh).